The primary structure comprises 440 residues: Acyltransferase Pun1 (440 aa).

Active-site proton acceptor residues include His-169 and Asp-384.

It belongs to the plant acyltransferase family.

The enzyme catalyses vanillylamine + (6E)-8-methylnon-6-enoyl-CoA = capsaicin + CoA + H(+). It carries out the reaction (6E)-8-methylnon-6-enoyl-CoA + 4-hydroxy-3-methoxy-benzenemethanol = capsiate + CoA. Its function is as follows. Involved in the biosynthesis of capsaicinoids and capsinoids natural products, pungent alkaloids synthesized from phenylpropanoid intermediates in the placental tissue of chili pepper fruit acting as repellant on herbivorous mammals and conferring spiciness to hot peppers. Catalyzes the biosynthesis of capsaicin, a pungent component, and of capsiate, a non-pungent component, from vanillylamine and vanillyl alcohol, respectively. Can transfer an acyl from 8-methylnon-6-enoyl-CoA to vanillylamine forming capsaicin and CoA. This chain is Acyltransferase Pun1, found in Capsicum frutescens (Cayenne pepper).